Consider the following 440-residue polypeptide: Streptokinase G (440 aa).

The signal sequence occupies residues 1 to 26 (MKNYLSFGMFALLFALTFGTVNSVQA).

Functionally, this protein is not a protease, but it activates plasminogen by complexing with it. As a potential virulence factor, it is thought to prevent the formation of effective fibrin barriers around the site of infection, thereby contributing to the invasiveness of the cells. This Streptococcus sp. (strain 19909) protein is Streptokinase G (skg).